A 279-amino-acid polypeptide reads, in one-letter code: Protein ABIL4 (279 aa).

Disordered stretches follow at residues 192–211 (VHNN…PMRF) and 219–241 (LLKR…EPQR). The segment covering 194–208 (NNINNRTPNKRSNSP) has biased composition (polar residues). Positions 219–228 (LLKRSSSPSQ) are enriched in low complexity.

The protein belongs to the ABI family. As to quaternary structure, binds SCAR.

The protein resides in the cytoplasm. It localises to the cytoskeleton. Functionally, involved in regulation of actin and microtubule organization. Part of a WAVE complex that activates the Arp2/3 complex. This Arabidopsis thaliana (Mouse-ear cress) protein is Protein ABIL4 (ABIL4).